A 375-amino-acid polypeptide reads, in one-letter code: Venom allergen 5 (375 aa).

The N-terminal stretch at 1-26 (MSAPVGIPSLLLALCALLCVLNAVRS) is a signal peptide. One can recognise an SCP domain in the interval 66–210 (VRLHNNLRSK…RRYTQIVCNY (145 aa)). N-linked (GlcNAc...) asparagine glycosylation is found at Asn300 and Asn366.

The protein belongs to the CRISP family. Venom allergen 5-like subfamily. In terms of processing, contains 9 disulfide bonds. As to expression, expressed by the venom gland.

It localises to the secreted. This chain is Venom allergen 5, found in Lycosa singoriensis (Wolf spider).